The following is a 40-amino-acid chain: Photosystem II reaction center protein J (40 aa).

Residues 8-28 (IPLWIIGTVTGIFGIGLIGIF) form a helical membrane-spanning segment.

This sequence belongs to the PsbJ family. As to quaternary structure, PSII is composed of 1 copy each of membrane proteins PsbA, PsbB, PsbC, PsbD, PsbE, PsbF, PsbH, PsbI, PsbJ, PsbK, PsbL, PsbM, PsbT, PsbX, PsbY, PsbZ, Psb30/Ycf12, at least 3 peripheral proteins of the oxygen-evolving complex and a large number of cofactors. It forms dimeric complexes.

The protein localises to the plastid membrane. One of the components of the core complex of photosystem II (PSII). PSII is a light-driven water:plastoquinone oxidoreductase that uses light energy to abstract electrons from H(2)O, generating O(2) and a proton gradient subsequently used for ATP formation. It consists of a core antenna complex that captures photons, and an electron transfer chain that converts photonic excitation into a charge separation. The chain is Photosystem II reaction center protein J from Cuscuta reflexa (Southern Asian dodder).